A 661-amino-acid chain; its full sequence is Zinc finger protein 81 (661 aa).

Residues 21–92 (VSFEDVTVDF…EGEAPHQSCS (72 aa)) form the KRAB domain. Lys266 participates in a covalent cross-link: Glycyl lysine isopeptide (Lys-Gly) (interchain with G-Cter in SUMO2). 12 C2H2-type zinc fingers span residues 330 to 352 (YICT…EKTH), 358 to 380 (YKCN…QTTH), 386 to 408 (FECS…QKIH), 414 to 436 (HKCS…QRIH), 442 to 464 (YICT…QRIH), 470 to 492 (YECS…KRIH), 498 to 520 (YICT…QKSH), 526 to 548 (YICA…QTIH), 554 to 576 (YVCA…QRIH), 582 to 604 (YKCP…QRIH), 610 to 632 (YICA…QTIH), and 638 to 660 (YKCS…RNIH).

The protein belongs to the krueppel C2H2-type zinc-finger protein family.

Its subcellular location is the nucleus. May be involved in transcriptional regulation. This chain is Zinc finger protein 81 (ZNF81), found in Homo sapiens (Human).